A 374-amino-acid chain; its full sequence is o-succinylbenzoate synthase (374 aa).

Catalysis depends on Lys164, which acts as the Proton donor. Asp189, Glu214, and Asp239 together coordinate Mg(2+). Lys263 serves as the catalytic Proton acceptor.

The protein belongs to the mandelate racemase/muconate lactonizing enzyme family. MenC type 2 subfamily. Homodimer. It depends on a divalent metal cation as a cofactor.

It carries out the reaction (1R,6R)-6-hydroxy-2-succinyl-cyclohexa-2,4-diene-1-carboxylate = 2-succinylbenzoate + H2O. Its pathway is quinol/quinone metabolism; 1,4-dihydroxy-2-naphthoate biosynthesis; 1,4-dihydroxy-2-naphthoate from chorismate: step 4/7. It participates in quinol/quinone metabolism; menaquinone biosynthesis. Its function is as follows. Converts 2-succinyl-6-hydroxy-2,4-cyclohexadiene-1-carboxylate (SHCHC) to 2-succinylbenzoate (OSB). Also acts as a N-succinylamino acid racemase (NSAR) that catalyzes the racemization of N-succinyl-L-phenylglycine. L.innocua has the menaquinone synthesis pathway, indicating that the species requires OSBS activity. However, the NSAR/OSBS is not encoded in the menaquinone operon, raising the possibility that both NSAR and OSBS are biological functions. In Listeria innocua serovar 6a (strain ATCC BAA-680 / CLIP 11262), this protein is o-succinylbenzoate synthase.